A 960-amino-acid chain; its full sequence is Cyclin-dependent kinase-like 5 (960 aa).

The Protein kinase domain occupies 13–297 (FEILGVVGEG…TEQCLNHPTF (285 aa)). Residues 19–27 (VGEGAYGVV) and Lys-42 contribute to the ATP site. Asp-135 functions as the Proton acceptor in the catalytic mechanism. Disordered regions lie at residues 300-349 (QRLL…IQNL), 382-566 (KTYQ…RHSK), 646-834 (SPQP…TQSQ), and 848-960 (ASNH…ETAL). Composition is skewed to polar residues over residues 319–336 (ESST…TALQ) and 382–402 (KTYQ…NNNI). Ser-407 carries the phosphoserine modification. Basic and acidic residues predominate over residues 407-417 (SPKEAKSKTEF). 3 stretches are compositionally biased toward polar residues: residues 434–462 (LKSN…QPNE), 473–482 (IPQSSRSPSY), and 510–548 (EPST…SGRN). Ser-479 is subject to Phosphoserine. Basic and acidic residues-rich tracts occupy residues 549-559 (NRNEGTLDSRR) and 679-704 (QKSE…RHLY). Ser-720 is modified (phosphoserine). The span at 728–748 (HENNVSTRVSSLPSESSSGTN) shows a compositional bias: polar residues. Position 761 is a phosphoserine (Ser-761). Positions 769-778 (EQLKEKEKQG) are enriched in basic and acidic residues. Polar residues predominate over residues 791 to 816 (QTVPNSDSPDLLTLQKSIHSASTPSS). Over residues 817 to 827 (RPKEWRPEKIS) the composition is skewed to basic and acidic residues. Polar residues-rich tracts occupy residues 862 to 872 (LTAQQTKNSFS), 880 to 890 (SQASGGSSNIR), and 914 to 928 (SSVT…SYSE).

Belongs to the protein kinase superfamily. CMGC Ser/Thr protein kinase family. CDC2/CDKX subfamily. As to quaternary structure, interacts with MECP2. Autophosphorylated. In terms of tissue distribution, expressed in brain, lung, kidney, prostate, ovary, placenta, pancreas and testis. As to expression, predominant transcript in brain.

It is found in the nucleus. Its subcellular location is the cytoplasm. It localises to the cytoskeleton. The protein resides in the cilium basal body. The protein localises to the microtubule organizing center. It is found in the centrosome. It catalyses the reaction L-seryl-[protein] + ATP = O-phospho-L-seryl-[protein] + ADP + H(+). The catalysed reaction is L-threonyl-[protein] + ATP = O-phospho-L-threonyl-[protein] + ADP + H(+). In terms of biological role, mediates phosphorylation of MECP2. May regulate ciliogenesis. The polypeptide is Cyclin-dependent kinase-like 5 (Homo sapiens (Human)).